A 457-amino-acid chain; its full sequence is Asparagine--tRNA ligase (457 aa).

Belongs to the class-II aminoacyl-tRNA synthetase family. As to quaternary structure, homodimer.

It localises to the cytoplasm. It carries out the reaction tRNA(Asn) + L-asparagine + ATP = L-asparaginyl-tRNA(Asn) + AMP + diphosphate + H(+). In Phytoplasma australiense, this protein is Asparagine--tRNA ligase.